The primary structure comprises 185 residues: Small ribosomal subunit protein uS7 (185 aa).

This sequence belongs to the universal ribosomal protein uS7 family. Part of the 30S ribosomal subunit.

Its function is as follows. One of the primary rRNA binding proteins, it binds directly to 16S rRNA where it nucleates assembly of the head domain of the 30S subunit. Is located at the subunit interface close to the decoding center. The protein is Small ribosomal subunit protein uS7 of Methanothrix thermoacetophila (strain DSM 6194 / JCM 14653 / NBRC 101360 / PT) (Methanosaeta thermophila).